A 185-amino-acid polypeptide reads, in one-letter code: Ribosome-recycling factor (185 aa).

This sequence belongs to the RRF family.

The protein localises to the cytoplasm. Its function is as follows. Responsible for the release of ribosomes from messenger RNA at the termination of protein biosynthesis. May increase the efficiency of translation by recycling ribosomes from one round of translation to another. The chain is Ribosome-recycling factor from Clostridioides difficile (strain 630) (Peptoclostridium difficile).